The sequence spans 208 residues: V-type ATP synthase subunit D (208 aa).

The protein belongs to the V-ATPase D subunit family.

Its function is as follows. Produces ATP from ADP in the presence of a proton gradient across the membrane. This Streptococcus pyogenes serotype M1 protein is V-type ATP synthase subunit D.